The chain runs to 235 residues: BPI fold-containing family A member 2 (235 aa).

Positions 1-20 (MFQLGSLVVLCGLLIGNSES) are cleaved as a signal peptide. The cysteines at positions 161 and 204 are disulfide-linked.

It belongs to the BPI/LBP/Plunc superfamily. Plunc family. In terms of tissue distribution, predominates in the parotid glands, present in smaller amounts (1/10) in the submaxillary glands and in the sublingual glands, and at lower amount in the pancreas but undetectable in the liver. Found also in lacrimal gland.

The protein localises to the secreted. Its function is as follows. Has strong antibacterial activity against P.aeruginosa. This is BPI fold-containing family A member 2 (Bpifa2) from Mus musculus (Mouse).